The primary structure comprises 1014 residues: Valine--tRNA ligase (1014 aa).

The 'HIGH' region motif lies at 49 to 59; that stretch reads PNVTGSLHMGH. Residues 542–546 carry the 'KMSKS' region motif; that stretch reads KMSKS. Lys545 is a binding site for ATP. A coiled-coil region spans residues 947–1014; that stretch reads VVDIETLRAK…ILRLRLQTLV (68 aa).

This sequence belongs to the class-I aminoacyl-tRNA synthetase family. ValS type 1 subfamily. As to quaternary structure, monomer.

It is found in the cytoplasm. It catalyses the reaction tRNA(Val) + L-valine + ATP = L-valyl-tRNA(Val) + AMP + diphosphate. Catalyzes the attachment of valine to tRNA(Val). As ValRS can inadvertently accommodate and process structurally similar amino acids such as threonine, to avoid such errors, it has a 'posttransfer' editing activity that hydrolyzes mischarged Thr-tRNA(Val) in a tRNA-dependent manner. In Nostoc sp. (strain PCC 7120 / SAG 25.82 / UTEX 2576), this protein is Valine--tRNA ligase.